We begin with the raw amino-acid sequence, 827 residues long: Villin-1 (827 aa).

A necessary for homodimerization region spans residues 1 to 126 (MTKLNAQVKG…IRKGGVASGM (126 aa)). Positions 1–734 (MTKLNAQVKG…YEDLKAELGN (734 aa)) are core. The stretch at 28-107 (QMVPVSSSTY…EVQGNESEAF (80 aa)) is one Gelsolin-like 1 repeat. LPA/PIP2-binding site regions lie at residues 112 to 119 (KQGIVIRK) and 138 to 146 (RLLHVKGKR). 2 Gelsolin-like repeats span residues 148 to 216 (VVAG…GEDE) and 269 to 342 (EVAT…SAVF). The residue at position 366 (serine 366) is a Phosphoserine. 3 Gelsolin-like repeats span residues 409–489 (DLVP…PHLM), 528–595 (TKAF…ANFW), and 634–707 (TEIP…PPTF). Serine 735 carries the post-translational modification Phosphoserine. An HP domain is found at 761–827 (SGPLPIFPLE…QNLKKEKGLF (67 aa)). The segment at 816–824 (KQQNLKKEK) is LPA/PIP2-binding site 3.

It belongs to the villin/gelsolin family. Monomer. Homodimer; homodimerization is necessary for actin-bundling. Associates with F-actin; phosphorylation at tyrosine residues decreases the association with F-actin. Interacts (phosphorylated at C-terminus tyrosine phosphorylation sites) with PLCG1 (via the SH2 domains). Interacts (phosphorylated form) with PLCG1; the interaction is enhanced by hepatocyte growth factor (HGF). Phosphorylated on tyrosine residues by SRC. The unphosphorylated form increases the initial rate of actin-nucleating activity, whereas the tyrosine-phosphorylated form inhibits actin-nucleating activity, enhances actin-bundling activity and enhances actin-severing activity by reducing high Ca(2+) requirements. The tyrosine-phosphorylated form does not regulate actin-capping activity. Tyrosine phosphorylation is essential for cell migration: tyrosine phosphorylation sites in the N-terminus half regulate actin reorganization and cell morphology, whereas tyrosine phosphorylation sites in the C-terminus half regulate cell migration. Tyrosine phosphorylation is induced by epidermal growth factor (EGF) and stimulates cell migration.

The protein resides in the cytoplasm. Its subcellular location is the cytoskeleton. The protein localises to the cell projection. It localises to the lamellipodium. It is found in the ruffle. The protein resides in the microvillus. Its subcellular location is the filopodium tip. The protein localises to the filopodium. Epithelial cell-specific Ca(2+)-regulated actin-modifying protein that modulates the reorganization of microvillar actin filaments. Plays a role in the actin nucleation, actin filament bundle assembly, actin filament capping and severing. Binds phosphatidylinositol 4,5-bisphosphate (PIP2) and lysophosphatidic acid (LPA); binds LPA with higher affinity than PIP2. Binding to LPA increases its phosphorylation by SRC and inhibits all actin-modifying activities. Binding to PIP2 inhibits actin-capping and -severing activities but enhances actin-bundling activity. Regulates the intestinal epithelial cell morphology, cell invasion, cell migration and apoptosis. Protects against apoptosis induced by dextran sodium sulfate (DSS) in the gastrointestinal epithelium. Appears to regulate cell death by maintaining mitochondrial integrity. Enhances hepatocyte growth factor (HGF)-induced epithelial cell motility, chemotaxis and wound repair. The polypeptide is Villin-1 (VIL1) (Sus scrofa (Pig)).